The primary structure comprises 421 residues: Imidazolonepropionase (421 aa).

H81 and H83 together coordinate Fe(3+). Zn(2+) is bound by residues H81 and H83. The 4-imidazolone-5-propanoate site is built by R90, Y153, and H186. Residue Y153 coordinates N-formimidoyl-L-glutamate. H251 contributes to the Fe(3+) binding site. Residue H251 participates in Zn(2+) binding. Residue E254 participates in 4-imidazolone-5-propanoate binding. Position 326 (D326) interacts with Fe(3+). Residue D326 participates in Zn(2+) binding. N-formimidoyl-L-glutamate-binding residues include N328 and G330. S331 contributes to the 4-imidazolone-5-propanoate binding site.

It belongs to the metallo-dependent hydrolases superfamily. HutI family. Zn(2+) is required as a cofactor. The cofactor is Fe(3+).

It is found in the cytoplasm. It carries out the reaction 4-imidazolone-5-propanoate + H2O = N-formimidoyl-L-glutamate. It participates in amino-acid degradation; L-histidine degradation into L-glutamate; N-formimidoyl-L-glutamate from L-histidine: step 3/3. Its function is as follows. Catalyzes the hydrolytic cleavage of the carbon-nitrogen bond in imidazolone-5-propanoate to yield N-formimidoyl-L-glutamate. It is the third step in the universal histidine degradation pathway. This chain is Imidazolonepropionase, found in Streptococcus gordonii (strain Challis / ATCC 35105 / BCRC 15272 / CH1 / DL1 / V288).